The primary structure comprises 364 residues: DNA replication and repair protein RecF (364 aa).

30–37 (GNNAQGKT) is a binding site for ATP.

The protein belongs to the RecF family.

Its subcellular location is the cytoplasm. Its function is as follows. The RecF protein is involved in DNA metabolism; it is required for DNA replication and normal SOS inducibility. RecF binds preferentially to single-stranded, linear DNA. It also seems to bind ATP. The protein is DNA replication and repair protein RecF of Clostridium botulinum (strain Okra / Type B1).